The primary structure comprises 438 residues: UDP-N-acetylmuramoylalanine--D-glutamate ligase (438 aa).

Residue 112–118 (GSNGKST) participates in ATP binding.

This sequence belongs to the MurCDEF family.

The protein localises to the cytoplasm. The enzyme catalyses UDP-N-acetyl-alpha-D-muramoyl-L-alanine + D-glutamate + ATP = UDP-N-acetyl-alpha-D-muramoyl-L-alanyl-D-glutamate + ADP + phosphate + H(+). It functions in the pathway cell wall biogenesis; peptidoglycan biosynthesis. In terms of biological role, cell wall formation. Catalyzes the addition of glutamate to the nucleotide precursor UDP-N-acetylmuramoyl-L-alanine (UMA). The sequence is that of UDP-N-acetylmuramoylalanine--D-glutamate ligase from Salmonella typhi.